The primary structure comprises 189 residues: GTPase NRas (189 aa).

GTP is bound at residue 10-17 (GAGGVGKS). Positions 32-40 (YDPTIEDSY) match the Effector region motif. Residues 57–61 (DTAGQ) and 116–119 (NKCD) each bind GTP. The segment at 166-185 (YRMKKLNSNEDGNQGCMGLS) is hypervariable region. Residue Cys-181 is the site of S-palmitoyl cysteine attachment. Cys-186 carries the S-farnesyl cysteine lipid modification. The propeptide at 187–189 (IVM) is removed in mature form.

Belongs to the small GTPase superfamily. Ras family. Palmitoylated by the ZDHHC9-GOLGA7 complex. Depalmitoylated by ABHD17A, ABHD17B and ABHD17C. A continuous cycle of de- and re-palmitoylation regulates rapid exchange between plasma membrane and Golgi.

The protein localises to the cell membrane. It is found in the golgi apparatus membrane. The catalysed reaction is GTP + H2O = GDP + phosphate + H(+). With respect to regulation, alternates between an inactive form bound to GDP and an active form bound to GTP. Activated by a guanine nucleotide-exchange factor (GEF) and inactivated by a GTPase-activating protein (GAP). In terms of biological role, ras proteins bind GDP/GTP and possess intrinsic GTPase activity. In Gallus gallus (Chicken), this protein is GTPase NRas (NRAS).